The chain runs to 802 residues: Phenylalanine--tRNA ligase beta subunit (802 aa).

One can recognise a tRNA-binding domain in the interval 38 to 148; the sequence is SKNFERVIVG…SEVPVGTDIS (111 aa). The B5 domain maps to 403-478; that stretch reads VIQKKIFVLK…RVFGYHNIPA (76 aa). 3 residues coordinate Mg(2+): Asp-456, Asp-462, and Asp-466. The 94-residue stretch at 703–796 folds into the FDX-ACB domain; sequence SLYPRCSRDI…LQEKFNAILR (94 aa).

It belongs to the phenylalanyl-tRNA synthetase beta subunit family. Type 1 subfamily. As to quaternary structure, tetramer of two alpha and two beta subunits. Requires Mg(2+) as cofactor.

It localises to the cytoplasm. The catalysed reaction is tRNA(Phe) + L-phenylalanine + ATP = L-phenylalanyl-tRNA(Phe) + AMP + diphosphate + H(+). The chain is Phenylalanine--tRNA ligase beta subunit from Buchnera aphidicola subsp. Baizongia pistaciae (strain Bp).